The sequence spans 479 residues: MNTILAQQIANEGGVEAWMMAQQHKSLLRFLTCGSVDDGKSTLIGRLLHDTLQIYEDQLSSLHNDSKRHGTQGEKLDLALLVDGLQAEREQGITIDVAYRYFSTEKRKFIIADTPGHEQYTRNMATGASTCDLAILLIDARKGVLDQTRRHSFISTLLGIKHLVVAINKMDLVDYREETFARIREDYLTFAEQLPGDLDIRFVPLSALEGDNVAAQSANMRWHSGPTLLEVLETVDIQRAVDRQPMRFPVQYVNRPNLDFRGYAGTLASGSVKVGERIKVLPSGVESSVARIVTFDGDKEEACAGEAITLVLNDDIDISRGDLLLAANETLAPARHAAIDVVWMAEQPLAPGQSYDVKLAGKKTRARIEAIRYQIDINNLTQRDVESLPLNGIGLVEMTFDEPLALDIYQQNPVTGGLIFIDRLSNVTVGAGMVRELDERGATPPVEYSAFELELNALVRRHFPHWDARDLLGDKHGAA.

One can recognise a tr-type G domain in the interval 25–239 (KSLLRFLTCG…EVLETVDIQR (215 aa)). A G1 region spans residues 34 to 41 (GSVDDGKS). A GTP-binding site is contributed by 34–41 (GSVDDGKS). The segment at 92 to 96 (GITID) is G2. Residues 113–116 (DTPG) form a G3 region. GTP-binding positions include 113-117 (DTPGH) and 168-171 (NKMD). Positions 168-171 (NKMD) are G4. A G5 region spans residues 206–208 (SAL).

This sequence belongs to the TRAFAC class translation factor GTPase superfamily. Classic translation factor GTPase family. CysN/NodQ subfamily. In terms of assembly, heterodimer composed of CysD, the smaller subunit, and CysN.

It carries out the reaction sulfate + ATP + H(+) = adenosine 5'-phosphosulfate + diphosphate. The protein operates within sulfur metabolism; hydrogen sulfide biosynthesis; sulfite from sulfate: step 1/3. In terms of biological role, with CysD forms the ATP sulfurylase (ATPS) that catalyzes the adenylation of sulfate producing adenosine 5'-phosphosulfate (APS) and diphosphate, the first enzymatic step in sulfur assimilation pathway. APS synthesis involves the formation of a high-energy phosphoric-sulfuric acid anhydride bond driven by GTP hydrolysis by CysN coupled to ATP hydrolysis by CysD. This chain is Sulfate adenylyltransferase subunit 1, found in Salmonella newport (strain SL254).